The sequence spans 157 residues: MRILGIDPGSRKCGYAIISHASNKLSLITAGFINITTTRLQEQILDLIEALDCLLDRYEVNEVAIEDIFFAYNPKSVIKLAQFRGALSLKILERIGNFSEYTPLQVKKALTGNGKAAKEQVAFMVKRLLNITSEIKPLDISDAIAVAITHAQRLKLH.

Residues Asp7, Glu66, and Asp139 contribute to the active site. Mg(2+)-binding residues include Asp7, Glu66, and Asp139.

This sequence belongs to the RuvC family. In terms of assembly, homodimer which binds Holliday junction (HJ) DNA. The HJ becomes 2-fold symmetrical on binding to RuvC with unstacked arms; it has a different conformation from HJ DNA in complex with RuvA. In the full resolvosome a probable DNA-RuvA(4)-RuvB(12)-RuvC(2) complex forms which resolves the HJ. Mg(2+) serves as cofactor.

The protein resides in the cytoplasm. It catalyses the reaction Endonucleolytic cleavage at a junction such as a reciprocal single-stranded crossover between two homologous DNA duplexes (Holliday junction).. The RuvA-RuvB-RuvC complex processes Holliday junction (HJ) DNA during genetic recombination and DNA repair. Endonuclease that resolves HJ intermediates. Cleaves cruciform DNA by making single-stranded nicks across the HJ at symmetrical positions within the homologous arms, yielding a 5'-phosphate and a 3'-hydroxyl group; requires a central core of homology in the junction. The consensus cleavage sequence is 5'-(A/T)TT(C/G)-3'. Cleavage occurs on the 3'-side of the TT dinucleotide at the point of strand exchange. HJ branch migration catalyzed by RuvA-RuvB allows RuvC to scan DNA until it finds its consensus sequence, where it cleaves and resolves the cruciform DNA. Its function is as follows. Required for efficient infection in a mouse model system. The sequence is that of Crossover junction endodeoxyribonuclease RuvC from Helicobacter pylori (strain G27).